A 173-amino-acid chain; its full sequence is MSIILGIDPGSRITGYGVIRQNGRHLQYLGSGCIRMSEKELPGRLKQIYAGVSEIITQFQPDVFAIEQVFMSKNADSALKLGQARGSAIVAAVNADLPVYEYAARLIKQAVTGTGGADKSQVQHMVMSMLKLPAKPQADAADALGAAICHANTNKTLIALAGKATGARRGRYR.

Active-site residues include D8, E67, and D139. Residues D8, E67, and D139 each contribute to the Mg(2+) site.

The protein belongs to the RuvC family. Homodimer which binds Holliday junction (HJ) DNA. The HJ becomes 2-fold symmetrical on binding to RuvC with unstacked arms; it has a different conformation from HJ DNA in complex with RuvA. In the full resolvosome a probable DNA-RuvA(4)-RuvB(12)-RuvC(2) complex forms which resolves the HJ. Mg(2+) is required as a cofactor.

Its subcellular location is the cytoplasm. The catalysed reaction is Endonucleolytic cleavage at a junction such as a reciprocal single-stranded crossover between two homologous DNA duplexes (Holliday junction).. Functionally, the RuvA-RuvB-RuvC complex processes Holliday junction (HJ) DNA during genetic recombination and DNA repair. Endonuclease that resolves HJ intermediates. Cleaves cruciform DNA by making single-stranded nicks across the HJ at symmetrical positions within the homologous arms, yielding a 5'-phosphate and a 3'-hydroxyl group; requires a central core of homology in the junction. The consensus cleavage sequence is 5'-(A/T)TT(C/G)-3'. Cleavage occurs on the 3'-side of the TT dinucleotide at the point of strand exchange. HJ branch migration catalyzed by RuvA-RuvB allows RuvC to scan DNA until it finds its consensus sequence, where it cleaves and resolves the cruciform DNA. In Aliivibrio fischeri (strain ATCC 700601 / ES114) (Vibrio fischeri), this protein is Crossover junction endodeoxyribonuclease RuvC.